The primary structure comprises 391 residues: Polyketide synthase 5 (391 aa).

Cys164 is an active-site residue.

Belongs to the thiolase-like superfamily. Chalcone/stilbene synthases family. In terms of assembly, homodimer. As to expression, expressed in fruits.

It carries out the reaction (E)-4-coumaroyl-CoA + 3 malonyl-CoA + 3 H(+) = 2',4,4',6'-tetrahydroxychalcone + 3 CO2 + 4 CoA. Its pathway is secondary metabolite biosynthesis; flavonoid biosynthesis. Functionally, polyketide synthase producing naringenin chalcone. Can use p-coumaryl-CoA as substrate. In Rubus idaeus (Raspberry), this protein is Polyketide synthase 5 (PKS5).